The chain runs to 29 residues: Cyclotide mobo-A (29 aa).

Residues 1 to 29 (GFPTCGETCTLGTCNTPGCTCSWPICTRN) constitute a cross-link (cyclopeptide (Gly-Asn)). Cystine bridges form between Cys-5–Cys-19, Cys-9–Cys-21, and Cys-14–Cys-26.

The protein belongs to the cyclotide family. Moebius subfamily. In terms of processing, this is a cyclic peptide.

Functionally, probably participates in a plant defense mechanism. The chain is Cyclotide mobo-A from Melicytus obovatus (Hymenanthera obovata).